Reading from the N-terminus, the 147-residue chain is Endoribonuclease YbeY (147 aa).

3 residues coordinate Zn(2+): histidine 109, histidine 113, and histidine 119.

The protein belongs to the endoribonuclease YbeY family. Requires Zn(2+) as cofactor.

It localises to the cytoplasm. Its function is as follows. Single strand-specific metallo-endoribonuclease involved in late-stage 70S ribosome quality control and in maturation of the 3' terminus of the 16S rRNA. This Magnetococcus marinus (strain ATCC BAA-1437 / JCM 17883 / MC-1) protein is Endoribonuclease YbeY.